The following is a 202-amino-acid chain: MNFLCKIVKNCRDEDTQKPSPASAPPDGDDLWLPPPEYVPLKELTSKKNMRNFCINGEVKVCSPNGYSFRILRHILRSFDEIYSGNHRMIGLVKVVVGLALSGAPAPEGMNWVYKLRRTLIFQWADSRGPLEGEELEHSQEITWDDDTEFVGLQMRVSARQCHIQGRIWCIDMNSRACQLWSDMSLQTQRSEEDKDSSLLLE.

The interval 14–33 is disordered; that stretch reads EDTQKPSPASAPPDGDDLWL. The PPXY motif signature appears at 35-38; the sequence is PPEY. The interval 115-151 is essential for glycoprotein binding; sequence KLRRTLIFQWADSRGPLEGEELEHSQEITWDDDTEFV.

The protein belongs to the lyssavirus matrix protein family. As to quaternary structure, homomultimer. Interacts with nucleoprotein and with the cytoplasmic domain of glycoprotein. Interacts with host ATP6V1A; this interaction plays an important role in virion uncoating after viral entry.

Its subcellular location is the virion membrane. The protein resides in the host endomembrane system. The protein localises to the host cytoplasm. Functionally, plays a major role in assembly, budding and uncoating of virion after membrane fusion. Completely covers the ribonucleoprotein coil and keep it in condensed bullet-shaped form. Inhibits viral transcription and stimulates replication. Plays a major role in early induction of TRAIL-mediated apoptosis in infected neurons. Inhibits the integrated stress response (ISR) in the infected cell by blocking the formation of stress granules. The sequence is that of Matrix protein (M) from Rabies virus (strain HEP-Flury) (RABV).